A 920-amino-acid polypeptide reads, in one-letter code: Dynamin-B (920 aa).

The tract at residues 65 to 84 is disordered; it reads NSNNNNNNNNNNKINKNNNN. A Dynamin-type G domain is found at 154–448; the sequence is EITLPQIIVV…LTKHIRDTFP (295 aa). The interval 164–171 is G1 motif; that stretch reads GSQSSGKS. 164–172 contributes to the GTP binding site; that stretch reads GSQSSGKSS. A G2 motif region spans residues 190 to 192; the sequence is VTR. The disordered stretch occupies residues 204 to 241; sequence TTSRNNVNENEDEDEDDNYYDNDNDDNSLEEWGEFGHT. Over residues 212 to 236 the composition is skewed to acidic residues; the sequence is ENEDEDEDDNYYDNDNDDNSLEEWG. The tract at residues 290-293 is G3 motif; that stretch reads DLPG. The tract at residues 359-362 is G4 motif; that stretch reads TKLD. GTP-binding positions include 359–365 and 390–393; these read TKLDLMD and NRSQ. The interval 389-392 is G5 motif; sequence VNRS. The tract at residues 680 to 790 is disordered; it reads FQSTSSTSSS…EIQIQQQQQQ (111 aa). Low complexity-rich tracts occupy residues 681–705 and 724–751; these read QSTS…NSNP and QIKQ…QKQQ. A coiled-coil region spans residues 724–751; that stretch reads QIKQQQQQQQQQQQQSYQQQQQQQQKQQ. The segment covering 765 to 774 has biased composition (pro residues); that stretch reads PPSPPSPPQP. The span at 775–790 shows a compositional bias: low complexity; that stretch reads KQQQSHEIQIQQQQQQ. The GED domain occupies 825–916; it reads IYLLRRLLLA…SLSQSENSDL (92 aa).

It belongs to the TRAFAC class dynamin-like GTPase superfamily. Dynamin/Fzo/YdjA family.

It localises to the cytoplasm. Functionally, enzyme hydrolyzing GTP. The polypeptide is Dynamin-B (dymB) (Dictyostelium discoideum (Social amoeba)).